Reading from the N-terminus, the 130-residue chain is Riboflavin kinase (130 aa).

Position 12–17 (12–17 (GLGVGA)) interacts with CDP. Mg(2+) contacts are provided by Thr39 and Asn41. FMN-binding residues include Thr90 and Glu98. A CDP-binding site is contributed by 103-106 (KNLR).

This sequence belongs to the archaeal riboflavin kinase family. The cofactor is Mg(2+).

The catalysed reaction is riboflavin + CTP = CDP + FMN + H(+). It participates in cofactor biosynthesis; FMN biosynthesis; FMN from riboflavin (CTP route): step 1/1. Catalyzes the CTP-dependent phosphorylation of riboflavin (vitamin B2) to form flavin mononucleotide (FMN). This is Riboflavin kinase from Staphylothermus marinus (strain ATCC 43588 / DSM 3639 / JCM 9404 / F1).